The following is a 311-amino-acid chain: tRNA-cytidine(32) 2-sulfurtransferase (311 aa).

Residues S47–S52 carry the PP-loop motif motif. 3 residues coordinate [4Fe-4S] cluster: C122, C125, and C213.

The protein belongs to the TtcA family. Homodimer. Mg(2+) is required as a cofactor. Requires [4Fe-4S] cluster as cofactor.

It localises to the cytoplasm. It carries out the reaction cytidine(32) in tRNA + S-sulfanyl-L-cysteinyl-[cysteine desulfurase] + AH2 + ATP = 2-thiocytidine(32) in tRNA + L-cysteinyl-[cysteine desulfurase] + A + AMP + diphosphate + H(+). It participates in tRNA modification. Its function is as follows. Catalyzes the ATP-dependent 2-thiolation of cytidine in position 32 of tRNA, to form 2-thiocytidine (s(2)C32). The sulfur atoms are provided by the cysteine/cysteine desulfurase (IscS) system. The sequence is that of tRNA-cytidine(32) 2-sulfurtransferase from Escherichia coli (strain K12 / MC4100 / BW2952).